The sequence spans 441 residues: GTPase Der (441 aa).

EngA-type G domains are found at residues 4–169 (PVVA…PDSS) and 178–353 (PRVA…ENNS). GTP is bound by residues 10–17 (GRPNVGKS), 57–61 (DTGGI), 120–123 (NKVD), 184–191 (GKPNVGKS), 231–235 (DTAGL), and 296–299 (NKWD). Positions 354-438 (MRVATGVLNE…ALKFITRERK (85 aa)) constitute a KH-like domain.

Belongs to the TRAFAC class TrmE-Era-EngA-EngB-Septin-like GTPase superfamily. EngA (Der) GTPase family. In terms of assembly, associates with the 50S ribosomal subunit.

Its function is as follows. GTPase that plays an essential role in the late steps of ribosome biogenesis. This is GTPase Der from Agathobacter rectalis (strain ATCC 33656 / DSM 3377 / JCM 17463 / KCTC 5835 / VPI 0990) (Eubacterium rectale).